The primary structure comprises 162 residues: NADH-quinone oxidoreductase subunit I (162 aa).

4Fe-4S ferredoxin-type domains follow at residues 53-83 (LRRY…IEAE) and 93-122 (TRYD…EGPN). 8 residues coordinate [4Fe-4S] cluster: Cys63, Cys66, Cys69, Cys73, Cys102, Cys105, Cys108, and Cys112.

Belongs to the complex I 23 kDa subunit family. In terms of assembly, NDH-1 is composed of 14 different subunits. Subunits NuoA, H, J, K, L, M, N constitute the membrane sector of the complex. [4Fe-4S] cluster serves as cofactor.

Its subcellular location is the cell inner membrane. The enzyme catalyses a quinone + NADH + 5 H(+)(in) = a quinol + NAD(+) + 4 H(+)(out). NDH-1 shuttles electrons from NADH, via FMN and iron-sulfur (Fe-S) centers, to quinones in the respiratory chain. The immediate electron acceptor for the enzyme in this species is believed to be ubiquinone. Couples the redox reaction to proton translocation (for every two electrons transferred, four hydrogen ions are translocated across the cytoplasmic membrane), and thus conserves the redox energy in a proton gradient. This chain is NADH-quinone oxidoreductase subunit I, found in Rhodospirillum centenum (strain ATCC 51521 / SW).